Here is a 383-residue protein sequence, read N- to C-terminus: Xylose/arabinose import ATP-binding protein XacJ (383 aa).

The 232-residue stretch at 4–235 (IQLTDLTKRF…PNNLFVAEFI (232 aa)) folds into the ABC transporter domain. 36-43 (GPSGCGKS) is a binding site for ATP.

It belongs to the ABC transporter superfamily. Carbohydrate uptake transporter-1 (CUT1) (TC 3.A.1.1) family. The complex is composed of two ATP-binding proteins (XacJ and XacK), two transmembrane proteins (XacH and XacI) and a solute-binding protein (XacG).

The protein localises to the cell membrane. The enzyme catalyses D-xylose(out) + ATP + H2O = D-xylose(in) + ADP + phosphate + H(+). It carries out the reaction L-arabinose(out) + ATP + H2O = L-arabinose(in) + ADP + phosphate + H(+). In terms of biological role, part of the ABC transporter complex XacGHIJK involved in the uptake of xylose and arabinose. Responsible for energy coupling to the transport system. The chain is Xylose/arabinose import ATP-binding protein XacJ from Haloferax volcanii (strain ATCC 29605 / DSM 3757 / JCM 8879 / NBRC 14742 / NCIMB 2012 / VKM B-1768 / DS2) (Halobacterium volcanii).